The chain runs to 220 residues: Pyrrolidone-carboxylate peptidase 1 (220 aa).

Residues Glu-80, Cys-143, and His-172 contribute to the active site.

This sequence belongs to the peptidase C15 family. Homotetramer.

It is found in the cytoplasm. It catalyses the reaction Release of an N-terminal pyroglutamyl group from a polypeptide, the second amino acid generally not being Pro.. In terms of biological role, removes 5-oxoproline from various penultimate amino acid residues except L-proline. The sequence is that of Pyrrolidone-carboxylate peptidase 1 from Photorhabdus laumondii subsp. laumondii (strain DSM 15139 / CIP 105565 / TT01) (Photorhabdus luminescens subsp. laumondii).